A 222-amino-acid chain; its full sequence is 2-C-methyl-D-erythritol 4-phosphate cytidylyltransferase (222 aa).

Belongs to the IspD/TarI cytidylyltransferase family. IspD subfamily.

The enzyme catalyses 2-C-methyl-D-erythritol 4-phosphate + CTP + H(+) = 4-CDP-2-C-methyl-D-erythritol + diphosphate. It functions in the pathway isoprenoid biosynthesis; isopentenyl diphosphate biosynthesis via DXP pathway; isopentenyl diphosphate from 1-deoxy-D-xylulose 5-phosphate: step 2/6. Functionally, catalyzes the formation of 4-diphosphocytidyl-2-C-methyl-D-erythritol from CTP and 2-C-methyl-D-erythritol 4-phosphate (MEP). This chain is 2-C-methyl-D-erythritol 4-phosphate cytidylyltransferase, found in Azobacteroides pseudotrichonymphae genomovar. CFP2.